Reading from the N-terminus, the 251-residue chain is tRNA (guanine-N(7)-)-methyltransferase (251 aa).

S-adenosyl-L-methionine is bound by residues E69, E94, D121, and D143. D143 is a catalytic residue. Residues K147 and D179 each coordinate substrate.

Belongs to the class I-like SAM-binding methyltransferase superfamily. TrmB family.

It catalyses the reaction guanosine(46) in tRNA + S-adenosyl-L-methionine = N(7)-methylguanosine(46) in tRNA + S-adenosyl-L-homocysteine. The protein operates within tRNA modification; N(7)-methylguanine-tRNA biosynthesis. Catalyzes the formation of N(7)-methylguanine at position 46 (m7G46) in tRNA. This is tRNA (guanine-N(7)-)-methyltransferase from Rhodopseudomonas palustris (strain BisB18).